Reading from the N-terminus, the 572-residue chain is Receptor-transporting protein 5 (572 aa).

The 3CxxC-type zinc-finger motif lies at 52–148; the sequence is SRLQCGHCPG…AYEGCCEACE (97 aa). The chain crosses the membrane as a helical span at residues 544-560; it reads FWIWVSMTVCVFWLMCM.

The protein resides in the membrane. The polypeptide is Receptor-transporting protein 5 (RTP5) (Homo sapiens (Human)).